Reading from the N-terminus, the 92-residue chain is RNA-binding protein Hfq (92 aa).

A Sm domain is found at 9–68 (DPFLNALRRERVPVSIYLVNGIKLQGQVESFDQFVILLKNTVSQMVYKHAISTVVPSRPF).

This sequence belongs to the Hfq family. Homohexamer.

In terms of biological role, RNA chaperone that binds small regulatory RNA (sRNAs) and mRNAs to facilitate mRNA translational regulation in response to envelope stress, environmental stress and changes in metabolite concentrations. Also binds with high specificity to tRNAs. This is RNA-binding protein Hfq from Shewanella piezotolerans (strain WP3 / JCM 13877).